The primary structure comprises 199 residues: Recombination protein RecR (199 aa).

The segment at 57–72 (CPICGNITEKEICDIC) adopts a C4-type zinc-finger fold. Residues 80–176 (TTIMVVEQPK…KVTRLAAGLS (97 aa)) enclose the Toprim domain.

Belongs to the RecR family.

Functionally, may play a role in DNA repair. It seems to be involved in an RecBC-independent recombinational process of DNA repair. It may act with RecF and RecO. The chain is Recombination protein RecR from Lactobacillus acidophilus (strain ATCC 700396 / NCK56 / N2 / NCFM).